The primary structure comprises 127 residues: UPF0325 protein VV1_1856 (127 aa).

Belongs to the UPF0325 family.

The polypeptide is UPF0325 protein VV1_1856 (Vibrio vulnificus (strain CMCP6)).